A 72-amino-acid polypeptide reads, in one-letter code: NADH dehydrogenase [ubiquinone] 1 beta subcomplex subunit 3-A (72 aa).

A helical transmembrane segment spans residues 31-48; the sequence is ALPGIGIGVGAFCVYLVG.

This sequence belongs to the complex I NDUFB3 subunit family. As to quaternary structure, complex I is composed of at least 49 different subunits.

It localises to the mitochondrion inner membrane. Its function is as follows. Accessory subunit of the mitochondrial membrane respiratory chain NADH dehydrogenase (Complex I), that is believed not to be involved in catalysis. Complex I functions in the transfer of electrons from NADH to the respiratory chain. The immediate electron acceptor for the enzyme is believed to be ubiquinone. The polypeptide is NADH dehydrogenase [ubiquinone] 1 beta subcomplex subunit 3-A (Arabidopsis thaliana (Mouse-ear cress)).